The sequence spans 97 residues: Citrate lyase acyl carrier protein (97 aa).

Ser14 carries the O-(phosphoribosyl dephospho-coenzyme A)serine modification.

This sequence belongs to the CitD family. In terms of assembly, oligomer with a subunit composition of (alpha,beta,gamma)6.

It is found in the cytoplasm. Functionally, covalent carrier of the coenzyme of citrate lyase. The protein is Citrate lyase acyl carrier protein of Oenococcus oeni (strain ATCC BAA-331 / PSU-1).